The primary structure comprises 265 residues: Beta-lactamase OXA-48 (265 aa).

An N-terminal signal peptide occupies residues 1-22 (MRVLALSAVFLVASIIGMPAVA). Catalysis depends on serine 70, which acts as the Acyl-ester intermediate. The a beta-lactam site is built by serine 70, lysine 73, serine 118, and arginine 250. The residue at position 73 (lysine 73) is an N6-carboxylysine.

Belongs to the class-D beta-lactamase family. As to quaternary structure, monomer. Dimer. Post-translationally, carboxylated on the epsilon-amino group of a lysine, with the resulting carbamate functional group serving as a general base. Probably N-carboxylated at Lys-73 at neutral pH in vivo and undergoes complete N-decarboxylation, at pH 4.1, in vitro.

The catalysed reaction is a beta-lactam + H2O = a substituted beta-amino acid. Its activity is regulated as follows. Inhibited by avibactam, related diazabicyclooctane (DBO) derivatives and by bicyclic boronic acids, via a covalent binding to Ser-70. Inhibited by chloride, bromide and iodide ions. Not inhibited by the beta-lactamase-blocking agents, clavulanic acid or tazobactam. Class D beta-lactamase which confers resistance to the beta-lactam antibiotics, including amoxicillin, and moderate resistance to cephalosporins and carbapenems such as cephalothin and imipenem; in the DH10B strain of E.coli. Acts via hydrolysis of the beta-lactam ring. Has oxacillin-, cephalothin- and imipenem-hydrolyzing activities. The protein is Beta-lactamase OXA-48 of Klebsiella pneumoniae.